The sequence spans 376 residues: N-acetyldiaminopimelate deacetylase (376 aa).

D69 is a catalytic residue. Residue E128 is the Proton acceptor of the active site.

The protein belongs to the peptidase M20A family. N-acetyldiaminopimelate deacetylase subfamily.

It carries out the reaction N-acetyl-(2S,6S)-2,6-diaminopimelate + H2O = (2S,6S)-2,6-diaminopimelate + acetate. It functions in the pathway amino-acid biosynthesis; L-lysine biosynthesis via DAP pathway; LL-2,6-diaminopimelate from (S)-tetrahydrodipicolinate (acetylase route): step 3/3. Its function is as follows. Catalyzes the conversion of N-acetyl-diaminopimelate to diaminopimelate and acetate. This chain is N-acetyldiaminopimelate deacetylase, found in Bacillus cereus (strain AH820).